The following is a 339-amino-acid chain: Lipoate-protein ligase A (339 aa).

Residues 29-217 (PKKQSILFLW…AFFQHYGMKV (189 aa)) form the BPL/LPL catalytic domain. Residues arginine 71, 76 to 79 (GAVF), and lysine 135 each bind ATP. Lysine 135 serves as a coordination point for (R)-lipoate.

It belongs to the LplA family. Monomer.

It is found in the cytoplasm. The catalysed reaction is L-lysyl-[lipoyl-carrier protein] + (R)-lipoate + ATP = N(6)-[(R)-lipoyl]-L-lysyl-[lipoyl-carrier protein] + AMP + diphosphate + H(+). It functions in the pathway protein modification; protein lipoylation via exogenous pathway; protein N(6)-(lipoyl)lysine from lipoate: step 1/2. It participates in protein modification; protein lipoylation via exogenous pathway; protein N(6)-(lipoyl)lysine from lipoate: step 2/2. Functionally, catalyzes both the ATP-dependent activation of exogenously supplied lipoate to lipoyl-AMP and the transfer of the activated lipoyl onto the lipoyl domains of lipoate-dependent enzymes. This chain is Lipoate-protein ligase A, found in Blochmanniella pennsylvanica (strain BPEN).